The primary structure comprises 198 residues: Holliday junction resolvase RecU (198 aa).

The disordered stretch occupies residues 1–22; it reads MVNYPHKLSSQKRQTSLSQPKN. Residues 11 to 22 show a composition bias toward polar residues; that stretch reads QKRQTSLSQPKN. Positions 81, 83, 96, and 115 each coordinate Mg(2+).

It belongs to the RecU family. Mg(2+) is required as a cofactor.

It localises to the cytoplasm. It catalyses the reaction Endonucleolytic cleavage at a junction such as a reciprocal single-stranded crossover between two homologous DNA duplexes (Holliday junction).. In terms of biological role, endonuclease that resolves Holliday junction intermediates in genetic recombination. Cleaves mobile four-strand junctions by introducing symmetrical nicks in paired strands. Promotes annealing of linear ssDNA with homologous dsDNA. Required for DNA repair, homologous recombination and chromosome segregation. The chain is Holliday junction resolvase RecU from Streptococcus pneumoniae (strain Hungary19A-6).